Consider the following 122-residue polypeptide: MAEVPGTSSETITETVQTGTPPPPQQEGRSLTIKLRKRKTEKKVEWSSDTVDNEHLGRRSSKCCCIYEKPRQFGESSSESEGDDEEGCGSAHCILGHGRRGHGQREGGGTTVPPSSGGTNPH.

Positions 1 to 12 (MAEVPGTSSETI) are enriched in polar residues. Positions 1–33 (MAEVPGTSSETITETVQTGTPPPPQQEGRSLTI) are disordered. At T20 the chain carries Phosphothreonine. Residues 55-65 (HLGRRSSKCCC) form an atypical RING finger domain 1 region. The disordered stretch occupies residues 72–122 (QFGESSSESEGDDEEGCGSAHCILGHGRRGHGQREGGGTTVPPSSGGTNPH). Residues 78-87 (SESEGDDEEG) are compositionally biased toward acidic residues. The interval 88–97 (CGSAHCILGH) is atypical RING finger domain 2. Residues 111-122 (TVPPSSGGTNPH) show a composition bias toward low complexity.

The catalysed reaction is S-ubiquitinyl-[E2 ubiquitin-conjugating enzyme]-L-cysteine + [acceptor protein]-L-lysine = [E2 ubiquitin-conjugating enzyme]-L-cysteine + N(6)-ubiquitinyl-[acceptor protein]-L-lysine.. It participates in protein modification; protein ubiquitination. Functionally, atypical E3 ubiquitin-protein ligase which ubiquitinates TLR2 at 'Lys-754' leading to its degradation by the proteasome. Inhibitor of protein phosphatase 1. The protein is E3 ubiquitin-protein ligase PPP1R11 (ppp1r11) of Danio rerio (Zebrafish).